Here is a 140-residue protein sequence, read N- to C-terminus: MAIERTLSIIKPDATRRNLTGKINAKFEEAGLRIVAQKRIHLSLAQAQKFYGVHKDRPFFGELTEFMASEPVVVQVLEGEGAIAKNREVMGATNPANADAGTIRKEFALSVGENSVHGSDAPETAAEEIAFFFSGLELVG.

Positions 11, 59, 87, 93, 104, and 114 each coordinate ATP. Catalysis depends on His117, which acts as the Pros-phosphohistidine intermediate.

Belongs to the NDK family. Homotetramer. Mg(2+) is required as a cofactor.

The protein resides in the cytoplasm. It carries out the reaction a 2'-deoxyribonucleoside 5'-diphosphate + ATP = a 2'-deoxyribonucleoside 5'-triphosphate + ADP. The catalysed reaction is a ribonucleoside 5'-diphosphate + ATP = a ribonucleoside 5'-triphosphate + ADP. Major role in the synthesis of nucleoside triphosphates other than ATP. The ATP gamma phosphate is transferred to the NDP beta phosphate via a ping-pong mechanism, using a phosphorylated active-site intermediate. The sequence is that of Nucleoside diphosphate kinase from Cereibacter sphaeroides (strain ATCC 17029 / ATH 2.4.9) (Rhodobacter sphaeroides).